Consider the following 785-residue polypeptide: Rho GTPase-activating protein 10 (785 aa).

A BAR domain is found at 7-262 (EFSDCYLDSP…IRQNPKDHKR (256 aa)). Positions 265-372 (QFTAEGYLYV…WLEVLGGKEA (108 aa)) constitute a PH domain. A Rho-GAP domain is found at 389–574 (AQLDKMGFTI…ILIENHEKIF (186 aa)). Residues 576-708 (TPPDATLPEP…PAVTPPSPKL (133 aa)) are disordered. Residues 584–595 (EPGPLSAPPNAP) show a composition bias toward pro residues. Residues 598-608 (QSKRQGQRTKR) are compositionally biased toward basic residues. A compositionally biased stretch (basic and acidic residues) spans 622 to 632 (GDRPSLPKEDT). Residues 633–650 (PPSSLDSLSSPSPTTATA) are compositionally biased toward low complexity. The span at 675 to 697 (APSQARSSAVQWLNPQSPTTPSC) shows a compositional bias: polar residues. The 59-residue stretch at 727 to 785 (IISRKARAVYPCEAEHSSELSFEIGAIFEDVQTSREPGWLEGTLNGKRGLIPQNYVKLL) folds into the SH3 domain.

Interacts with PKN3. Interacts with caspase-activated PAK2 proteolytic fragment PAK-2p34; the interaction does not affect ARHGAP10 GTPase activation activity towards RHOA and CDC42. Interacts via its SH3 domain with PTK2/FAK1. Interacts with PTK2B/PYK2; the interaction negatively regulates ARHGAP10 GTPase-activating activity. Interacts with MICAL1 and WDR44; complex formation might transit from GRAF2/ARHGAP10-MICAL1 to GRAF2/ARHGAP10-WDR44 complexes.

The protein localises to the cytoplasm. The protein resides in the perinuclear region. It localises to the cell membrane. Its subcellular location is the endosome membrane. In terms of biological role, GTPase-activating protein that catalyzes the conversion of active GTP-bound Rho GTPases to their inactive GDP-bound form, thus suppressing various Rho GTPase-mediated cellular processes. Also converts Cdc42 to an inactive GDP-bound state. Essential for PTKB2 regulation of cytoskeletal organization via Rho family GTPases. Inhibits PAK2 proteolytic fragment PAK-2p34 kinase activity and changes its localization from the nucleus to the perinuclear region. Stabilizes PAK-2p34 thereby increasing stimulation of cell death. Associates with MICAL1 on the endosomal membrane to promote Rab8-Rab10-dependent tubule extension. After dissociation with MICAL1, recruits WDR44 which connects the endoplasmic reticulum (ER) with the endosomal tubule, thereby participating in the export of a subset of neosynthesized proteins. The protein is Rho GTPase-activating protein 10 (ARHGAP10) of Bos taurus (Bovine).